The sequence spans 400 residues: CCA-adding enzyme (400 aa).

Glycine 8 and arginine 11 together coordinate ATP. Residues glycine 8 and arginine 11 each contribute to the CTP site. The Mg(2+) site is built by aspartate 21 and aspartate 23. ATP is bound by residues arginine 91, arginine 137, and arginine 140. The CTP site is built by arginine 91, arginine 137, and arginine 140. The region spanning asparagine 217 to tryptophan 322 is the HD domain.

Belongs to the tRNA nucleotidyltransferase/poly(A) polymerase family. Bacterial CCA-adding enzyme type 2 subfamily. It depends on Mg(2+) as a cofactor.

It carries out the reaction a tRNA precursor + 2 CTP + ATP = a tRNA with a 3' CCA end + 3 diphosphate. It catalyses the reaction a tRNA with a 3' CCA end + 2 CTP + ATP = a tRNA with a 3' CCACCA end + 3 diphosphate. Functionally, catalyzes the addition and repair of the essential 3'-terminal CCA sequence in tRNAs without using a nucleic acid template. Adds these three nucleotides in the order of C, C, and A to the tRNA nucleotide-73, using CTP and ATP as substrates and producing inorganic pyrophosphate. tRNA 3'-terminal CCA addition is required both for tRNA processing and repair. Also involved in tRNA surveillance by mediating tandem CCA addition to generate a CCACCA at the 3' terminus of unstable tRNAs. While stable tRNAs receive only 3'-terminal CCA, unstable tRNAs are marked with CCACCA and rapidly degraded. The sequence is that of CCA-adding enzyme from Actinobacillus succinogenes (strain ATCC 55618 / DSM 22257 / CCUG 43843 / 130Z).